The sequence spans 193 residues: dTTP/UTP pyrophosphatase (193 aa).

Asp77 acts as the Proton acceptor in catalysis.

It belongs to the Maf family. YhdE subfamily. A divalent metal cation is required as a cofactor.

The protein resides in the cytoplasm. It catalyses the reaction dTTP + H2O = dTMP + diphosphate + H(+). The catalysed reaction is UTP + H2O = UMP + diphosphate + H(+). In terms of biological role, nucleoside triphosphate pyrophosphatase that hydrolyzes dTTP and UTP. May have a dual role in cell division arrest and in preventing the incorporation of modified nucleotides into cellular nucleic acids. The polypeptide is dTTP/UTP pyrophosphatase (Phocaeicola vulgatus (strain ATCC 8482 / DSM 1447 / JCM 5826 / CCUG 4940 / NBRC 14291 / NCTC 11154) (Bacteroides vulgatus)).